Consider the following 238-residue polypeptide: Cysteine-rich venom protein (238 aa).

The first 19 residues, 1 to 19, serve as a signal peptide directing secretion; that stretch reads MIAFIVLLSLAAVLQQSSG. A propeptide spanning residues 20-27 is cleaved from the precursor; that stretch reads TVDFASES. Residues 39-164 form the SCP domain; that stretch reads KKHNALRRSV…PTKYLYVCQY (126 aa). 8 disulfide bridges follow: cysteine 75/cysteine 153, cysteine 92/cysteine 165, cysteine 148/cysteine 162, cysteine 184/cysteine 191, cysteine 187/cysteine 196, cysteine 200/cysteine 233, cysteine 209/cysteine 227, and cysteine 218/cysteine 231. Residues 200 to 233 form the ShKT domain; it reads CKREDDYSNCKSLAEKNKCMEEWMKSKCPASCFC.

It belongs to the CRISP family. In terms of tissue distribution, expressed by the venom gland.

Its subcellular location is the secreted. Functionally, blocks olfactory (CNGA2) and retinal (CNGA1) cyclic nucleotide-gated (CNG) ion channel currents. Does not inhibit retinal (CNGA3) currents. It forms high-affinity contacts with the pore turret region and most likely inhibits CNG channel current by blocking the external entrance to the transmembrane pore. Does not affect neither depolarization- nor caffeine-induced contraction arterial smooth muscle. This is Cysteine-rich venom protein from Demansia vestigiata (Lesser black whip snake).